The sequence spans 533 residues: MKVSTIFAAASALFAATTTLAQDVACLVDNQQVAVVDLDTGVCPFTIPASLAAFFTFVSLEEYNVQFYYTIVNNVRYNTDIRNAGKVINVPARNLYGAGAVPFFQVHLEKQLEANSTAAIRRRLMGETPIVKRDQIDDFIASIENTEGTALEGSTLEVVDYVPGSSSASPSGSASPSGSESGSGSDSATIRSTTVVSSSSCESSGDSAATATGANGESTVTEQNTVVVTITSCHNDACHATTVPATASIGVTTVHGTETIFTTYCPLSSYETVESTKVITITSCSENKCQETTVEATPSTATTVSEGVVTEYVTYCPVSSVETVASTKVITVVACDEHKCHETTAVATPTEVTTVVEGSTTHYVTYKPTGSGPTQGETYATNAITSEGTVYVPKTTAVTTHGSTFETVAYITVTKATPTKGGEQHQPGSPAGAATSAPGAPAPGASGAHASTANKVTVEAQATPGTLTPENTVAGGVNGEQVAVSAKTTISQTTVAKASGSGKAAISTFEGAAAASAGASVLALALIPLAYFI.

The signal sequence occupies residues 1–21 (MKVSTIFAAASALFAATTTLA). N-linked (GlcNAc...) asparagine glycosylation occurs at N115. Disordered regions lie at residues 161–219 (YVPG…GEST) and 418–451 (PTKG…AHAS). Composition is skewed to low complexity over residues 163 to 214 (PGSS…ATGA) and 427 to 451 (PGSP…AHAS). Residue G511 is the site of GPI-anchor amidated glycine attachment. A propeptide spans 512–533 (AAAASAGASVLALALIPLAYFI) (removed in mature form).

Belongs to the flocculin family. Post-translationally, the GPI-anchor is attached to the protein in the endoplasmic reticulum and serves to target the protein to the cell surface. There, the glucosamine-inositol phospholipid moiety is cleaved off and the GPI-modified mannoprotein is covalently attached via its lipidless GPI glycan remnant to the 1,6-beta-glucan of the outer cell wall layer. In terms of processing, cleaved by SAP9 and SAP10, which leads to its release from the cell wall. N-glycosylated.

It is found in the secreted. The protein localises to the cell wall. The protein resides in the membrane. Cell wall protein which plays an anti-adhesive role and promotes dispersal of yeast forms, which allows the organism to seek new sites for colonization. The chain is Yeast-form wall Protein 1 (YWP1) from Candida albicans (strain SC5314 / ATCC MYA-2876) (Yeast).